The following is a 792-amino-acid chain: Phenylalanine--tRNA ligase beta subunit (792 aa).

The tRNA-binding domain occupies 39-147; the sequence is ARTLEKVVVG…ADAPIGKNIQ (109 aa). Residues 400–475 enclose the B5 domain; it reads PKIPRIILRP…HLYGYDRIPQ (76 aa). Residues aspartate 453, aspartate 459, glutamate 462, and glutamate 463 each contribute to the Mg(2+) site. The FDX-ACB domain maps to 697–791; that stretch reads SKFPSIRRDI…LERKFNAKLR (95 aa).

This sequence belongs to the phenylalanyl-tRNA synthetase beta subunit family. Type 1 subfamily. As to quaternary structure, tetramer of two alpha and two beta subunits. It depends on Mg(2+) as a cofactor.

It is found in the cytoplasm. It carries out the reaction tRNA(Phe) + L-phenylalanine + ATP = L-phenylalanyl-tRNA(Phe) + AMP + diphosphate + H(+). This Coxiella burnetii (strain RSA 493 / Nine Mile phase I) protein is Phenylalanine--tRNA ligase beta subunit.